Reading from the N-terminus, the 220-residue chain is Fructose-6-phosphate aldolase (220 aa).

K85 (schiff-base intermediate with substrate) is an active-site residue.

It belongs to the transaldolase family. Type 3A subfamily. As to quaternary structure, homodecamer.

It is found in the cytoplasm. It carries out the reaction beta-D-fructose 6-phosphate = dihydroxyacetone + D-glyceraldehyde 3-phosphate. Functionally, catalyzes the reversible formation of fructose 6-phosphate from dihydroxyacetone and D-glyceraldehyde 3-phosphate via an aldolization reaction. This is Fructose-6-phosphate aldolase from Salmonella arizonae (strain ATCC BAA-731 / CDC346-86 / RSK2980).